Here is a 589-residue protein sequence, read N- to C-terminus: L-fucose isomerase (589 aa).

Catalysis depends on proton acceptor residues Glu340 and Asp364. Glu340, Asp364, and His527 together coordinate Mn(2+).

The protein belongs to the L-fucose isomerase family. Requires Mn(2+) as cofactor.

It localises to the cytoplasm. It catalyses the reaction L-fucose = L-fuculose. The protein operates within carbohydrate degradation; L-fucose degradation; L-lactaldehyde and glycerone phosphate from L-fucose: step 1/3. Converts the aldose L-fucose into the corresponding ketose L-fuculose. In Haemophilus influenzae (strain ATCC 51907 / DSM 11121 / KW20 / Rd), this protein is L-fucose isomerase.